Reading from the N-terminus, the 399-residue chain is Acetate kinase (399 aa).

N7 contacts Mg(2+). Position 14 (K14) interacts with ATP. R91 provides a ligand contact to substrate. The active-site Proton donor/acceptor is D148. Residues 208–212 (HIGNG), 283–285 (DMR), and 331–335 (GVGEN) each bind ATP. E385 provides a ligand contact to Mg(2+).

Belongs to the acetokinase family. In terms of assembly, homodimer. The cofactor is Mg(2+). Mn(2+) is required as a cofactor.

It is found in the cytoplasm. It carries out the reaction acetate + ATP = acetyl phosphate + ADP. Its pathway is metabolic intermediate biosynthesis; acetyl-CoA biosynthesis; acetyl-CoA from acetate: step 1/2. Functionally, catalyzes the formation of acetyl phosphate from acetate and ATP. Can also catalyze the reverse reaction. The sequence is that of Acetate kinase from Bacteroides thetaiotaomicron (strain ATCC 29148 / DSM 2079 / JCM 5827 / CCUG 10774 / NCTC 10582 / VPI-5482 / E50).